The sequence spans 180 residues: Cytokinin-beta-glucosidase 2 (180 aa).

Hydrolyzes cytokinin glucosides thus liberating free cytokinins. The polypeptide is Cytokinin-beta-glucosidase 2 (ROLC2) (Panax ginseng (Korean ginseng)).